Here is a 213-residue protein sequence, read N- to C-terminus: MRSGVIAQKVGMTRVYNDAGEHVPVTVLRLDNCQVLAQRTVDKHGYTAVQLGAGQAKVKNTSKAMRGNFAAANVEPKAKLVEFRVSEDNLMDVGSELKAGHFEAGQLVDVTGTTIGKGFAGAMKRHNFGGLRATHGVSVSHRSHGSTGSNQDPGKVWKGKRMAGHMGQTRVTTQNLEVVSTDEDRGLILVKGAVPGSKGSWIIVRDAVKSAAK.

Residue glutamine 151 is modified to N5-methylglutamine.

This sequence belongs to the universal ribosomal protein uL3 family. In terms of assembly, part of the 50S ribosomal subunit. Forms a cluster with proteins L14 and L19. Methylated by PrmB.

In terms of biological role, one of the primary rRNA binding proteins, it binds directly near the 3'-end of the 23S rRNA, where it nucleates assembly of the 50S subunit. The chain is Large ribosomal subunit protein uL3 from Allorhizobium ampelinum (strain ATCC BAA-846 / DSM 112012 / S4) (Agrobacterium vitis (strain S4)).